A 268-amino-acid polypeptide reads, in one-letter code: Protein MGF 300-1L (268 aa).

The Cytoplasmic portion of the chain corresponds to 1-175 (MVSLTTYCLK…QTFKTFYAKN (175 aa)). The helical transmembrane segment at 176-193 (YSLSTLYCIFLAIYYKLY) threads the bilayer. Residues 194-268 (MALRKMVKIY…MYAFSQNNFW (75 aa)) are Extracellular-facing.

It belongs to the asfivirus MGF 300 family.

The protein localises to the host membrane. Functionally, plays a role in virus cell tropism, and may be required for efficient virus replication in macrophages. The chain is Protein MGF 300-1L from African swine fever virus (isolate Tick/Malawi/Lil 20-1/1983) (ASFV).